Consider the following 212-residue polypeptide: Probable transaldolase (212 aa).

Catalysis depends on lysine 83, which acts as the Schiff-base intermediate with substrate.

Belongs to the transaldolase family. Type 3B subfamily.

The protein localises to the cytoplasm. It carries out the reaction D-sedoheptulose 7-phosphate + D-glyceraldehyde 3-phosphate = D-erythrose 4-phosphate + beta-D-fructose 6-phosphate. It functions in the pathway carbohydrate degradation; pentose phosphate pathway; D-glyceraldehyde 3-phosphate and beta-D-fructose 6-phosphate from D-ribose 5-phosphate and D-xylulose 5-phosphate (non-oxidative stage): step 2/3. Functionally, transaldolase is important for the balance of metabolites in the pentose-phosphate pathway. This is Probable transaldolase (tal) from Halalkalibacterium halodurans (strain ATCC BAA-125 / DSM 18197 / FERM 7344 / JCM 9153 / C-125) (Bacillus halodurans).